The primary structure comprises 782 residues: Beta-mannosyltransferase 9 (782 aa).

At 1–26 (MEKLIQSTISLFISLSLKISTKSYKS) the chain is on the cytoplasmic side. A helical membrane pass occupies residues 27-47 (IISILFIISLLSIILTTTITV). The Extracellular portion of the chain corresponds to 48-782 (YHDPERIITT…GKDKGKDKSN (735 aa)). Residues 66-96 (KSVFTASSPKQQDKLQQEIDQHQSDNSHEQQ) are disordered. A compositionally biased stretch (basic and acidic residues) spans 76–96 (QQDKLQQEIDQHQSDNSHEQQ). Asparagine 445, asparagine 648, and asparagine 699 each carry an N-linked (GlcNAc...) asparagine glycan.

Belongs to the BMT family.

It is found in the membrane. Functionally, beta-mannosyltransferase involved in cell wall biosynthesis through beta-1,2-mannosylation of cell wall phosphopeptidomannan. In Candida albicans (strain SC5314 / ATCC MYA-2876) (Yeast), this protein is Beta-mannosyltransferase 9 (BMT9).